The primary structure comprises 183 residues: Large ribosomal subunit protein uL10 (183 aa).

It belongs to the universal ribosomal protein uL10 family. As to quaternary structure, part of the ribosomal stalk of the 50S ribosomal subunit. The N-terminus interacts with L11 and the large rRNA to form the base of the stalk. The C-terminus forms an elongated spine to which L12 dimers bind in a sequential fashion forming a multimeric L10(L12)X complex.

Functionally, forms part of the ribosomal stalk, playing a central role in the interaction of the ribosome with GTP-bound translation factors. The protein is Large ribosomal subunit protein uL10 of Mesomycoplasma hyopneumoniae (strain 232) (Mycoplasma hyopneumoniae).